The chain runs to 445 residues: Tubulin beta-1 chain (445 aa).

GTP is bound by residues Q11, E69, S138, G142, T143, G144, N204, and N226. A Mg(2+)-binding site is contributed by E69. Positions 422 to 445 (QYQDAGMDDEYGEEYEDEAPAEEE) are disordered. A compositionally biased stretch (acidic residues) spans 427 to 445 (GMDDEYGEEYEDEAPAEEE).

The protein belongs to the tubulin family. As to quaternary structure, dimer of alpha and beta chains. A typical microtubule is a hollow water-filled tube with an outer diameter of 25 nm and an inner diameter of 15 nM. Alpha-beta heterodimers associate head-to-tail to form protofilaments running lengthwise along the microtubule wall with the beta-tubulin subunit facing the microtubule plus end conferring a structural polarity. Microtubules usually have 13 protofilaments but different protofilament numbers can be found in some organisms and specialized cells. Requires Mg(2+) as cofactor.

It localises to the cytoplasm. The protein localises to the cytoskeleton. Its function is as follows. Tubulin is the major constituent of microtubules, a cylinder consisting of laterally associated linear protofilaments composed of alpha- and beta-tubulin heterodimers. Microtubules grow by the addition of GTP-tubulin dimers to the microtubule end, where a stabilizing cap forms. Below the cap, tubulin dimers are in GDP-bound state, owing to GTPase activity of alpha-tubulin. This Colletotrichum graminicola (Maize anthracnose fungus) protein is Tubulin beta-1 chain (TUB1).